The following is a 231-amino-acid chain: Eukaryotic translation initiation factor 4E-1 (231 aa).

2 EIF4G-binding regions span residues 56-59 and 66-102; these read HPLE and FDNS…NNIH. MRNA is bound by residues 74 to 79, Lys106, and 124 to 125; these read RQTAWG and WE. The cysteines at positions 129 and 167 are disulfide-linked. An EIF4G-binding region spans residues 150–159; the sequence is YTLLAMIGHQ. MRNA-binding positions include 174-179 and 219-223; these read RAKGEK and KRLDR.

This sequence belongs to the eukaryotic initiation factor 4E family. EIF4F is a multi-subunit complex, the composition of which varies with external and internal environmental conditions. It is composed of at least EIF4A, EIF4E and EIF4G. EIF4E is also known to interact with other partners. In higher plants two isoforms of EIF4F have been identified, named isoform EIF4F and isoform EIF(iso)4F. Isoform EIF4F has subunits p220 and p26, whereas isoform EIF(iso)4F has subunits p82 and p28. In terms of assembly, (Microbial infection) Interacts with potyvirus viral genome-linked protein (VPg); this interaction is possible in susceptible hosts but impaired in resistant plants. In terms of processing, according to the redox status, the Cys-129-Cys-167 disulfide bridge may have a role in regulating protein function by affecting its ability to bind capped mRNA.

The protein localises to the nucleus. The protein resides in the cytoplasm. In terms of biological role, component of the protein complex eIF4F, which is involved in the recognition of the mRNA cap, ATP-dependent unwinding of 5'-terminal secondary structure and recruitment of mRNA to the ribosome. Recognizes and binds the 7-methylguanosine-containing mRNA cap during an early step in the initiation of protein synthesis and facilitates ribosome binding by inducing the unwinding of the mRNAs secondary structures. Key component of recessive resistance to potyviruses. Functionally, (Microbial infection) Susceptibility host factor required for viral infection (e.g. pepper mottle virus (PepMoV), potato virus Y (PVY) and tobacco etch virus (TEV)) by recruiting viral RNAs to the host ribosomal complex via an interaction with viral genome-linked protein (VPg). The chain is Eukaryotic translation initiation factor 4E-1 from Solanum habrochaites (Wild tomato).